The chain runs to 113 residues: Small ribosomal subunit protein uS17 (113 aa).

It belongs to the universal ribosomal protein uS17 family. In terms of assembly, part of the 30S ribosomal subunit.

Its function is as follows. One of the primary rRNA binding proteins, it binds specifically to the 5'-end of 16S ribosomal RNA. This Pyrococcus abyssi (strain GE5 / Orsay) protein is Small ribosomal subunit protein uS17.